The following is a 57-amino-acid chain: Potassium channel toxin alpha-KTx 26.1 (57 aa).

Positions 1 to 22 are cleaved as a signal peptide; sequence MSRLFVFILIALFLSAIIDVMS. Intrachain disulfides connect Cys-30–Cys-48, Cys-34–Cys-53, and Cys-38–Cys-55.

This sequence belongs to the short scorpion toxin superfamily. Potassium channel inhibitor family. Alpha-KTx 26 subfamily. In terms of tissue distribution, expressed by the venom gland.

The protein localises to the secreted. Functionally, recombinant toxin that reversibly inhibits the potassium current of mKv1.3/KCNA3 channel stably expressed in COS7 cells (IC(50)=150 nM). Also shows a weak inhibition on Kv1.2/KCNA2, Kv1.3/KCNA3 and TRPV1 channels. The protein is Potassium channel toxin alpha-KTx 26.1 of Olivierus martensii (Manchurian scorpion).